The primary structure comprises 426 residues: MQKNIKNVSETEQELEIILSAEEFGTEYNQELEEAKRNIQIKGFRKGHAPASLIKKLAGPSIEATVAEKMASKYFGEIADAEKIKPASRAQIIDVAFAPEELKITLAYEIHPEFEVKDFSGYTFTQNRYVITDEDITREINLILKGHGTLNTVDEAALSTDTVIGDVYKLNEAGETDDDQKTDNHHFTLEYLPEENPFRKALTGKKAGESVDIENDEKESAQPSRFRVVISEIKRLELPELTDELVKEITGGRFESVTDFTADVRIQLEQHFLLKSDEELLESLSAKLIEENPVPAPNSMIASFSKMLLENAKRQMGGSFPKGFDDEQFRLAMKPNAEKHAQWLMISQKIAEDATLSVSDDDIKAYADKEAEKSESMDAEEILKTYLSPEFRDYITDTILKEKIYNIIKSKVTITEEEKSIPVRQE.

In terms of domain architecture, PPIase FKBP-type spans 165–239 (GDVYKLNEAG…ISEIKRLELP (75 aa)).

This sequence belongs to the FKBP-type PPIase family. Tig subfamily.

Its subcellular location is the cytoplasm. The catalysed reaction is [protein]-peptidylproline (omega=180) = [protein]-peptidylproline (omega=0). Its function is as follows. Involved in protein export. Acts as a chaperone by maintaining the newly synthesized protein in an open conformation. Functions as a peptidyl-prolyl cis-trans isomerase. This Pelodictyon phaeoclathratiforme (strain DSM 5477 / BU-1) protein is Trigger factor.